Reading from the N-terminus, the 521-residue chain is Cytochrome P450 monooxygenase ABA2 (521 aa).

The chain crosses the membrane as a helical span at residues 15–35 (AGHLGMAVTFTILVAFTIHVL). Asn-366 carries an N-linked (GlcNAc...) asparagine glycan. Position 458 (Cys-458) interacts with heme.

This sequence belongs to the cytochrome P450 family. Requires heme as cofactor.

The protein localises to the membrane. The protein operates within hormone biosynthesis. Functionally, cytochrome P450 monooxygenase involved in the biosynthesis of abscisic acid (ABA), a phytohormone that acts antagonistically toward salicylic acid (SA), jasmonic acid (JA) and ethylene (ETH) signaling, to impede plant defense responses. During pathogen-host interaction, ABA plays a dual role in disease severity by increasing plant susceptibility and accelerating pathogenesis in the fungus itself. The first step of the pathway catalyzes the reaction from farnesyl diphosphate to alpha-ionylideneethane performed by the alpha-ionylideneethane synthase ABA3 via a three-step reaction mechanism involving 2 neutral intermediates, beta-farnesene and allofarnesene. The cytochrome P450 monooxygenase ABA1 might then be involved in the conversion of alpha-ionylideneethane to alpha-ionylideneacetic acid. Alpha-ionylideneacetic acid is further converted to abscisic acid in 2 steps involving the cytochrome P450 monooxygenase ABA2 and the short-chain dehydrogenase/reductase ABA4, via the intermediates 1'-deoxy-ABA or 1',4'-trans-diol-ABA, depending on the order of action of these 2 enzymes. ABA2 is responsible for the hydroxylation of carbon atom C-1' and ABA4 might be involved in the oxidation of the C-4' carbon atom. The chain is Cytochrome P450 monooxygenase ABA2 from Pyricularia oryzae (strain 70-15 / ATCC MYA-4617 / FGSC 8958) (Rice blast fungus).